Consider the following 221-residue polypeptide: Oxaloacetate tautomerase FAHD1, mitochondrial (221 aa).

The N-terminal 24 residues, 1–24 (MAASRPLSRFWEWGKNIVCVGRNY), are a transit peptide targeting the mitochondrion. The residue at position 37 (S37) is a Phosphoserine. The Mg(2+) site is built by E68, E70, and D99. The residue at position 110 (K110) is an N6-acetyllysine. K112 is subject to N6-succinyllysine.

The protein belongs to the FAH family. Homodimer. Mg(2+) serves as cofactor. It depends on Mn(2+) as a cofactor.

It is found in the mitochondrion. The protein localises to the cytoplasm. It localises to the cytosol. The enzyme catalyses oxaloacetate = enol-oxaloacetate. The catalysed reaction is oxaloacetate + H(+) = pyruvate + CO2. It catalyses the reaction a 3-acylpyruvate + H2O = a carboxylate + pyruvate + H(+). It carries out the reaction acetylpyruvate + H2O = acetate + pyruvate + H(+). The enzyme catalyses 3-fumarylpyruvate + H2O = fumarate + pyruvate + H(+). Oxaloacetate decarboxylation is competitively inhibited by oxalate. In terms of biological role, tautomerase that converts enol-oxaloacetate, a strong inhibitor of succinate dehydrogenase, to the physiological keto form of oxaloacetate. It is thereby required to maximize aerobic respiration efficiency by preventing succinate dehydrogenase inhibition. Also acts as a weak oxaloacetate decarboxylase (ODx), catalyzing the decarboxylation of oxaloacetate (OAA) to pyruvate and CO(2), and as such is likely a regulatory enzyme in the TCA cycle. Also displays acylpyruvase activity, being able to hydrolyze acetylpyruvate and fumarylpyruvate in vitro. The polypeptide is Oxaloacetate tautomerase FAHD1, mitochondrial (Bos taurus (Bovine)).